The sequence spans 352 residues: Phenylalanine--tRNA ligase alpha subunit (352 aa).

Glu-258 is a Mg(2+) binding site.

This sequence belongs to the class-II aminoacyl-tRNA synthetase family. Phe-tRNA synthetase alpha subunit type 1 subfamily. In terms of assembly, tetramer of two alpha and two beta subunits. Mg(2+) is required as a cofactor.

It is found in the cytoplasm. The enzyme catalyses tRNA(Phe) + L-phenylalanine + ATP = L-phenylalanyl-tRNA(Phe) + AMP + diphosphate + H(+). This is Phenylalanine--tRNA ligase alpha subunit from Staphylococcus aureus (strain NCTC 8325 / PS 47).